The sequence spans 299 residues: ATP phosphoribosyltransferase (299 aa).

Belongs to the ATP phosphoribosyltransferase family. Long subfamily. As to quaternary structure, equilibrium between an active dimeric form, an inactive hexameric form and higher aggregates. Interconversion between the various forms is largely reversible and is influenced by the natural substrates and inhibitors of the enzyme. The cofactor is Mg(2+).

Its subcellular location is the cytoplasm. The catalysed reaction is 1-(5-phospho-beta-D-ribosyl)-ATP + diphosphate = 5-phospho-alpha-D-ribose 1-diphosphate + ATP. It participates in amino-acid biosynthesis; L-histidine biosynthesis; L-histidine from 5-phospho-alpha-D-ribose 1-diphosphate: step 1/9. With respect to regulation, feedback inhibited by histidine. Its function is as follows. Catalyzes the condensation of ATP and 5-phosphoribose 1-diphosphate to form N'-(5'-phosphoribosyl)-ATP (PR-ATP). Has a crucial role in the pathway because the rate of histidine biosynthesis seems to be controlled primarily by regulation of HisG enzymatic activity. The protein is ATP phosphoribosyltransferase of Edwardsiella ictaluri (strain 93-146).